The primary structure comprises 858 residues: Gamma-secretase-activating protein (858 aa).

Belongs to the GSAP family. As to quaternary structure, interacts with APP; specifically interacts with the CTF-alpha product of APP. Interacts with the gamma-secretase complex. Post-translationally, the protein is first synthesized as a holoprotein form of 98 kDa and rapidly processed into the gamma-secretase-activating protein 16 kDa C-terminal form, which constitutes the predominant form.

It is found in the golgi apparatus. The protein localises to the trans-Golgi network. In terms of biological role, regulator of gamma-secretase activity, which specifically activates the production of amyloid-beta protein (amyloid-beta protein 40 and amyloid-beta protein 42), without affecting the cleavage of other gamma-secretase targets such has Notch. The gamma-secretase complex is an endoprotease complex that catalyzes the intramembrane cleavage of integral membrane proteins such as Notch receptors and APP (amyloid-beta precursor protein). Specifically promotes the gamma-cleavage of APP CTF-alpha (also named APP-CTF) by the gamma-secretase complex to generate amyloid-beta, while it reduces the epsilon-cleavage of APP CTF-alpha, leading to a low production of AICD. This chain is Gamma-secretase-activating protein (Gsap), found in Mus musculus (Mouse).